We begin with the raw amino-acid sequence, 153 residues long: Endoribonuclease YbeY (153 aa).

Positions 114, 118, and 124 each coordinate Zn(2+).

This sequence belongs to the endoribonuclease YbeY family. It depends on Zn(2+) as a cofactor.

It localises to the cytoplasm. Functionally, single strand-specific metallo-endoribonuclease involved in late-stage 70S ribosome quality control and in maturation of the 3' terminus of the 16S rRNA. This chain is Endoribonuclease YbeY, found in Shewanella sp. (strain MR-7).